The following is a 159-amino-acid chain: Phosphopantetheine adenylyltransferase (159 aa).

His16 is a binding site for ATP. Substrate-binding residues include Lys40, Met72, and Arg86. ATP-binding positions include 87-89 (GLR), Glu97, and 122-128 (YQYLSAS).

The protein belongs to the bacterial CoaD family. As to quaternary structure, homohexamer. The cofactor is Mg(2+).

The protein localises to the cytoplasm. The enzyme catalyses (R)-4'-phosphopantetheine + ATP + H(+) = 3'-dephospho-CoA + diphosphate. The protein operates within cofactor biosynthesis; coenzyme A biosynthesis; CoA from (R)-pantothenate: step 4/5. In terms of biological role, reversibly transfers an adenylyl group from ATP to 4'-phosphopantetheine, yielding dephospho-CoA (dPCoA) and pyrophosphate. This chain is Phosphopantetheine adenylyltransferase, found in Dehalococcoides mccartyi (strain CBDB1).